Here is a 50-residue protein sequence, read N- to C-terminus: Protein HokA (50 aa).

A helical membrane pass occupies residues 7-24 (LLSLIVICFTLLFFTWMI).

Belongs to the Hok/Gef family.

The protein localises to the cell inner membrane. Toxic component of a type I toxin-antitoxin (TA) system. When overexpressed kills cells within minutes; causes collapse of the transmembrane potential and arrest of respiration. Its toxic effect is probably neutralized by antisense antitoxin RNA SokA. The polypeptide is Protein HokA (Escherichia coli (strain K12)).